We begin with the raw amino-acid sequence, 114 residues long: Probable 4-amino-4-deoxy-L-arabinose-phosphoundecaprenol flippase subunit ArnE (114 aa).

Positions 39-112 (RSPWLWLALF…VIGGVALLGQ (74 aa)) constitute an EamA domain. 3 helical membrane-spanning segments follow: residues 41 to 61 (PWLW…LLVL), 64 to 84 (LPVS…TLIA), and 91 to 111 (PVDV…ALLG).

This sequence belongs to the ArnE family. As to quaternary structure, heterodimer of ArnE and ArnF.

Its subcellular location is the cell inner membrane. It functions in the pathway bacterial outer membrane biogenesis; lipopolysaccharide biosynthesis. Functionally, translocates 4-amino-4-deoxy-L-arabinose-phosphoundecaprenol (alpha-L-Ara4N-phosphoundecaprenol) from the cytoplasmic to the periplasmic side of the inner membrane. The protein is Probable 4-amino-4-deoxy-L-arabinose-phosphoundecaprenol flippase subunit ArnE of Pseudomonas fluorescens (strain Pf0-1).